The chain runs to 487 residues: ATP-dependent RNA helicase DBP3 (487 aa).

Residues 1–40 (MAKRSRNMESNSERSSRPKKKSKGDAKPEQPPYVQSAELD) form a disordered region. A Q motif motif is present at residues 71–98 (TAFSYLPSDSNQLYGPLEHFSKPTPIQS). A Helicase ATP-binding domain is found at 101-276 (WPYLFAGRDV…TTFMKEPVTV (176 aa)). Residue 114-121 (AETGSGKT) participates in ATP binding. The DEAD box signature appears at 222–225 (DEAD). The Helicase C-terminal domain maps to 291-456 (RIKQIVEVVK…DIPEALLKFG (166 aa)).

The protein belongs to the DEAD box helicase family. DDX5/DBP2 subfamily.

Its subcellular location is the nucleus. It is found in the nucleolus. The catalysed reaction is ATP + H2O = ADP + phosphate + H(+). In terms of biological role, ATP-dependent RNA helicase required for 60S ribosomal subunit synthesis. Involved in efficient pre-rRNA processing, predominantly at site A3, which is necessary for the normal formation of 25S and 5.8S rRNAs. This is ATP-dependent RNA helicase DBP3 (DBP3) from Ajellomyces capsulatus (strain NAm1 / WU24) (Darling's disease fungus).